The sequence spans 393 residues: METFLFTSESVNEGHPDKLCDQISDAVLDACLEQDPDSKVACETCTKTNMVMVFGEITTKATVDYEKIVRDTCRSIGFISDDVGLDADKCKVLVNIEQQSPDIAQGVHGHFTKRPEDIGAGDQGHMFGYATDETPELMPLSHVLATKIGAKLTEVRKNGTCRWLRPNGKTQVTGEYYNDNGAMVPVRVHTVLISTQHDETVTNDEIARDLKEHVIKPIIPEKYLDDKTIFHLNPSGRFVIGGPHGDAGLTGRKIIIDTYGGWGAHGGGAFSGKDPTKVDRSGAYIVRQAAKSVVANGMARRALVQVSYAIGVPEPLSVFVDTYGTGLIPDKEILKIVKESFDFRPGMMTINLDLKRGGNGRFLKTAAYGHFGRDDPDFTWEVVKPLKWDKPQA.

Glutamate 9 lines the Mg(2+) pocket. Histidine 15 contributes to the ATP binding site. Residue glutamate 43 coordinates K(+). Positions 56 and 99 each coordinate L-methionine. Residues 167 to 169 (NGK), 235 to 238 (SGRF), aspartate 246, 252 to 253 (RK), alanine 269, lysine 273, and lysine 277 contribute to the ATP site. Aspartate 246 contributes to the L-methionine binding site. Position 277 (lysine 277) interacts with L-methionine.

This sequence belongs to the AdoMet synthase family. Homotetramer. Mn(2+) serves as cofactor. The cofactor is Mg(2+). It depends on Co(2+) as a cofactor. K(+) is required as a cofactor. In terms of tissue distribution, mostly expressed in flowers, seedpods and roots, and, to a lower extent, in stems and leaves.

Its subcellular location is the cytoplasm. The catalysed reaction is L-methionine + ATP + H2O = S-adenosyl-L-methionine + phosphate + diphosphate. It participates in amino-acid biosynthesis; S-adenosyl-L-methionine biosynthesis; S-adenosyl-L-methionine from L-methionine: step 1/1. In terms of biological role, catalyzes the formation of S-adenosylmethionine from methionine and ATP. The reaction comprises two steps that are both catalyzed by the same enzyme: formation of S-adenosylmethionine (AdoMet) and triphosphate, and subsequent hydrolysis of the triphosphate. This chain is S-adenosylmethionine synthase 3 (MSAMS3), found in Brassica juncea (Indian mustard).